We begin with the raw amino-acid sequence, 100 residues long: Small ribosomal subunit protein uS14c (100 aa).

It belongs to the universal ribosomal protein uS14 family. As to quaternary structure, part of the 30S ribosomal subunit.

The protein resides in the plastid. It is found in the chloroplast. Functionally, binds 16S rRNA, required for the assembly of 30S particles. The polypeptide is Small ribosomal subunit protein uS14c (Cycas taitungensis (Prince sago)).